We begin with the raw amino-acid sequence, 314 residues long: Vacuolar membrane protein SCRG_03194 (314 aa).

The interval 32–60 (KPTSSVVSETSSKSLPSLTSSAFSTSSGA) is disordered. Residues 93-113 (VYIAVGAVIGAIFISILIWWL) traverse the membrane as a helical segment. 3 positions are modified to phosphoserine: Ser148, Ser254, and Ser274. A disordered region spans residues 240 to 309 (EERKLNLNRP…PSMFLDDVLN (70 aa)). Residues 254-269 (SPERKEKKINSMEGYH) are compositionally biased toward basic and acidic residues.

The protein belongs to the PRM5 family.

Its subcellular location is the vacuole membrane. In Saccharomyces cerevisiae (strain RM11-1a) (Baker's yeast), this protein is Vacuolar membrane protein SCRG_03194.